We begin with the raw amino-acid sequence, 31 residues long: Cytochrome b6-f complex subunit 6 (31 aa).

A helical transmembrane segment spans residues 4-26 (ITSYFGFLLTALTITSALFIGLS).

The protein belongs to the PetL family. As to quaternary structure, the 4 large subunits of the cytochrome b6-f complex are cytochrome b6, subunit IV (17 kDa polypeptide, PetD), cytochrome f and the Rieske protein, while the 4 small subunits are PetG, PetL, PetM and PetN. The complex functions as a dimer.

It localises to the plastid. The protein localises to the chloroplast thylakoid membrane. Component of the cytochrome b6-f complex, which mediates electron transfer between photosystem II (PSII) and photosystem I (PSI), cyclic electron flow around PSI, and state transitions. PetL is important for photoautotrophic growth as well as for electron transfer efficiency and stability of the cytochrome b6-f complex. The sequence is that of Cytochrome b6-f complex subunit 6 from Lactuca sativa (Garden lettuce).